The sequence spans 390 residues: Neutrophil cytosol factor 1 (390 aa).

The PX domain maps to 4–125 (TFIRHIALLG…DFFKVRPDDL (122 aa)). 2 SH3 domains span residues 156-215 (IILQ…PLDS) and 226-285 (YAGE…KAGE). Positions 291–390 (QRQIRGRGAP…STKRKLTSAV (100 aa)) are disordered. Residues serine 304, serine 321, serine 329, and serine 346 each carry the phosphoserine modification. A compositionally biased stretch (basic and acidic residues) spans 374-383 (ILHRCTESTK).

As to quaternary structure, component of the phagocyte NADPH oxidase complex composed of an obligatory core heterodimer formed by the membrane proteins CYBA and CYBB and the cytosolic regulatory subunits NCF1/p47-phox, NCF2/p67-phox, NCF4/p40-phox and the small GTPase RAC1 or RAC2. Part of a cytosolic complex composed at least by NCF1, NCF2 and NCF4. Interacts (via C-terminus) with NCF2 (via the C-terminal SH3 domain). Interacts with NCF4. Interacts with CYBB. Interacts (via the second SH3 domain) with CYBA; interaction is phosphorylation-dependent. Interacts with NOXA1. Interacts with ADAM15. Interacts with TRAF4. Interacts with FASLG. Interacts with PARK7 (via C-terminus); the interaction is enhanced by LPS and modulates NCF1 phosphorylation and membrane translocation. Phosphorylated by PRKCD; phosphorylation induces activation of NCF1, leading to assembly and activation of the NADPH oxidase complex.

It is found in the cytoplasm. The protein resides in the cytosol. It localises to the membrane. Functionally, subunit of the phagocyte NADPH oxidase complex that mediates the transfer of electrons from cytosolic NADPH to O2 to produce the superoxide anion (O2(-)). In the activated complex, electrons are first transferred from NADPH to flavin adenine dinucleotide (FAD) and subsequently transferred via two heme molecules to molecular oxygen, producing superoxide through an outer-sphere reaction. Activation of the NADPH oxidase complex is initiated by the assembly of cytosolic subunits of the NADPH oxidase complex with the core NADPH oxidase complex to form a complex at the plasma membrane or phagosomal membrane. This activation process is initiated by phosphorylation dependent binding of the cytosolic NCF1/p47-phox subunit to the C-terminus of CYBA/p22-phox. The sequence is that of Neutrophil cytosol factor 1 from Mus musculus (Mouse).